The following is a 1317-amino-acid chain: DNA-directed RNA polymerase subunit beta' (1317 aa).

Zn(2+)-binding residues include Cys-60, Cys-62, Cys-75, and Cys-78. The interval 183 to 209 (ELEDEGAKSDVKRKVRDGGEREMRQLR) is disordered. Positions 535, 537, and 539 each coordinate Mg(2+). Zn(2+) is bound by residues Cys-890, Cys-967, Cys-974, and Cys-977.

It belongs to the RNA polymerase beta' chain family. As to quaternary structure, the RNAP catalytic core consists of 2 alpha, 1 beta, 1 beta' and 1 omega subunit. When a sigma factor is associated with the core the holoenzyme is formed, which can initiate transcription. Mg(2+) serves as cofactor. The cofactor is Zn(2+).

It catalyses the reaction RNA(n) + a ribonucleoside 5'-triphosphate = RNA(n+1) + diphosphate. DNA-dependent RNA polymerase catalyzes the transcription of DNA into RNA using the four ribonucleoside triphosphates as substrates. This is DNA-directed RNA polymerase subunit beta' from Mycolicibacterium vanbaalenii (strain DSM 7251 / JCM 13017 / BCRC 16820 / KCTC 9966 / NRRL B-24157 / PYR-1) (Mycobacterium vanbaalenii).